Reading from the N-terminus, the 636-residue chain is Epsin-3 (636 aa).

Positions 8, 11, 25, 30, 63, and 73 each coordinate a 1,2-diacyl-sn-glycero-3-phospho-(1D-myo-inositol-4,5-bisphosphate). The 133-residue stretch at N12 to R144 folds into the ENTH domain. The disordered stretch occupies residues R153–A503. A compositionally biased stretch (low complexity) spans G174–A189. Phosphoserine is present on residues S184 and S185. UIM domains lie at E202–P221 and D229–G248. 2 stretches are compositionally biased toward basic and acidic residues: residues S214 to D231 and R242 to D256. A Phosphoserine modification is found at S257. Over residues R270 to K288 the composition is skewed to basic and acidic residues. Tandem repeats lie at residues D315–W317, D338–W340, E365–W367, D381–W383, and D398–W400. The interval D315–W400 is 5 X 3 AA repeats of [DE]-P-W. The segment covering E426–D435 has biased composition (basic and acidic residues). A run of 2 repeats spans residues N523–F525 and N536–F538. Residues N523–F635 are 3 X 3 AA repeats of N-P-F. A compositionally biased stretch (pro residues) spans P607–L616. The tract at residues P607–L636 is disordered. The stretch at N633–F635 is repeat 3.

The protein belongs to the epsin family.

The protein localises to the cytoplasm. The protein resides in the cell cortex. It is found in the perinuclear region. It localises to the cytoplasmic vesicle. Its subcellular location is the clathrin-coated vesicle. The polypeptide is Epsin-3 (Epn3) (Mus musculus (Mouse)).